The chain runs to 354 residues: Molybdenum import ATP-binding protein ModC (354 aa).

Positions 1-229 (MLELDFEQQL…SALRLWLQKE (229 aa)) constitute an ABC transporter domain. Position 31–38 (31–38 (GLSGAGKT)) interacts with ATP. The region spanning 289 to 354 (GSSIRNILAV…IKSVSFHRQL (66 aa)) is the Mop domain.

Belongs to the ABC transporter superfamily. Molybdate importer (TC 3.A.1.8) family. As to quaternary structure, the complex is composed of two ATP-binding proteins (ModC), two transmembrane proteins (ModB) and a solute-binding protein (ModA).

Its subcellular location is the cell inner membrane. The catalysed reaction is molybdate(out) + ATP + H2O = molybdate(in) + ADP + phosphate + H(+). Part of the ABC transporter complex ModABC involved in molybdenum import. Responsible for energy coupling to the transport system. The sequence is that of Molybdenum import ATP-binding protein ModC from Photorhabdus laumondii subsp. laumondii (strain DSM 15139 / CIP 105565 / TT01) (Photorhabdus luminescens subsp. laumondii).